The chain runs to 387 residues: Succinate--CoA ligase [ADP-forming] subunit beta (387 aa).

An ATP-grasp domain is found at 9–236; that stretch reads KELFAKHNVP…RAATDPLELK (228 aa). Residues K45, 52-54, S94, and E99 each bind ATP; that span reads GRG. Positions 191 and 205 each coordinate Mg(2+). Substrate contacts are provided by residues N256 and 318–320; that span reads GIT.

The protein belongs to the succinate/malate CoA ligase beta subunit family. As to quaternary structure, heterotetramer of two alpha and two beta subunits. Mg(2+) is required as a cofactor.

It catalyses the reaction succinate + ATP + CoA = succinyl-CoA + ADP + phosphate. The enzyme catalyses GTP + succinate + CoA = succinyl-CoA + GDP + phosphate. It participates in carbohydrate metabolism; tricarboxylic acid cycle; succinate from succinyl-CoA (ligase route): step 1/1. Its function is as follows. Succinyl-CoA synthetase functions in the citric acid cycle (TCA), coupling the hydrolysis of succinyl-CoA to the synthesis of either ATP or GTP and thus represents the only step of substrate-level phosphorylation in the TCA. The beta subunit provides nucleotide specificity of the enzyme and binds the substrate succinate, while the binding sites for coenzyme A and phosphate are found in the alpha subunit. This is Succinate--CoA ligase [ADP-forming] subunit beta from Mycobacterium marinum (strain ATCC BAA-535 / M).